We begin with the raw amino-acid sequence, 682 residues long: Methionine--tRNA ligase (682 aa).

The 'HIGH' region motif lies at 14–24 (PYANGSIHLGH). The Zn(2+) site is built by C145, C148, C158, and C161. Positions 331-335 (KMSKS) match the 'KMSKS' region motif. Residue K334 coordinates ATP. The tRNA-binding domain occupies 580-682 (AFAAIDLRVA…SGARPGQRIK (103 aa)).

This sequence belongs to the class-I aminoacyl-tRNA synthetase family. MetG type 1 subfamily. In terms of assembly, homodimer. Zn(2+) serves as cofactor.

The protein localises to the cytoplasm. It carries out the reaction tRNA(Met) + L-methionine + ATP = L-methionyl-tRNA(Met) + AMP + diphosphate. Functionally, is required not only for elongation of protein synthesis but also for the initiation of all mRNA translation through initiator tRNA(fMet) aminoacylation. In Pseudomonas syringae pv. syringae (strain B728a), this protein is Methionine--tRNA ligase.